The sequence spans 404 residues: Argininosuccinate synthase (404 aa).

Residues 11–19 (AYSGGLDTS) and Ala-38 contribute to the ATP site. L-citrulline-binding residues include Tyr-91 and Ser-96. Position 121 (Gly-121) interacts with ATP. L-aspartate-binding residues include Thr-123, Asn-127, and Asp-128. Asn-127 provides a ligand contact to L-citrulline. Arg-131, Ser-181, Ser-190, Glu-266, and Tyr-278 together coordinate L-citrulline.

Belongs to the argininosuccinate synthase family. Type 1 subfamily. As to quaternary structure, homotetramer.

It is found in the cytoplasm. It carries out the reaction L-citrulline + L-aspartate + ATP = 2-(N(omega)-L-arginino)succinate + AMP + diphosphate + H(+). Its pathway is amino-acid biosynthesis; L-arginine biosynthesis; L-arginine from L-ornithine and carbamoyl phosphate: step 2/3. In Sulfurimonas denitrificans (strain ATCC 33889 / DSM 1251) (Thiomicrospira denitrificans (strain ATCC 33889 / DSM 1251)), this protein is Argininosuccinate synthase.